Reading from the N-terminus, the 218-residue chain is Putative glutamine transport system permease protein GlnP (218 aa).

Positions 19-208 (TLVTLKYSII…ILVMLISFIA (190 aa)) constitute an ABC transmembrane type-1 domain. A run of 4 helical transmembrane segments spans residues 25–45 (YSII…ICKV), 57–79 (FYTS…FAAP), 86–108 (FSVF…SEVI), and 187–207 (FFPM…ISFI).

It belongs to the binding-protein-dependent transport system permease family. HisMQ subfamily.

It is found in the cell inner membrane. Its function is as follows. Part of the binding-protein-dependent transport system for glutamine; probably responsible for the translocation of the substrate across the membrane. The sequence is that of Putative glutamine transport system permease protein GlnP (glnP) from Rickettsia typhi (strain ATCC VR-144 / Wilmington).